We begin with the raw amino-acid sequence, 351 residues long: Biotin synthase (351 aa).

The region spanning 73 to 298 (PEVEVEGIIS…RTILRYSGGR (226 aa)) is the Radical SAM core domain. Cys-88, Cys-92, and Cys-95 together coordinate [4Fe-4S] cluster. Residues Cys-131, Cys-164, Cys-223, and Arg-293 each contribute to the [2Fe-2S] cluster site.

The protein belongs to the radical SAM superfamily. Biotin synthase family. Homodimer. It depends on [4Fe-4S] cluster as a cofactor. Requires [2Fe-2S] cluster as cofactor.

The enzyme catalyses (4R,5S)-dethiobiotin + (sulfur carrier)-SH + 2 reduced [2Fe-2S]-[ferredoxin] + 2 S-adenosyl-L-methionine = (sulfur carrier)-H + biotin + 2 5'-deoxyadenosine + 2 L-methionine + 2 oxidized [2Fe-2S]-[ferredoxin]. The protein operates within cofactor biosynthesis; biotin biosynthesis; biotin from 7,8-diaminononanoate: step 2/2. Functionally, catalyzes the conversion of dethiobiotin (DTB) to biotin by the insertion of a sulfur atom into dethiobiotin via a radical-based mechanism. This chain is Biotin synthase, found in Frankia alni (strain DSM 45986 / CECT 9034 / ACN14a).